The chain runs to 563 residues: L-lactate permease (563 aa).

The next 14 helical transmembrane spans lie at 14–34 (LLLSALAALVPIIFFFWALAI), 37–57 (MKGYTAGLATLGIALIIAVLV), 73–93 (AVYGLLPIGWIIVTSVFLYKI), 131–151 (GAAGFGAPVAISAALLVGLGF), 157–177 (AGICLIANTAPVAFGAIGIPI), 194–214 (MVGRQLPFLSVFIPLYLIIIM), 220–240 (ALEIWPAILVSGVSFAVVQYL), 249–269 (LPDVLSALVSMAALAVFLKWW), 304–324 (IFKAWSPFLLLTAMISVWGIP), 381–401 (LGSAGTAILIAAVLSKFITAI), 419–439 (LPILTIASVVGFAYVTNSSGM), 448–468 (ALTGSMFTFFSPVLGWLGVFI), 506–526 (VTGKMISPQSIAVACAAVGLA), and 542–562 (FLLLLVCIITFLQHHVFSWMI).

The protein belongs to the lactate permease family.

The protein resides in the cell membrane. Its function is as follows. Is the principal permease for the uptake of L-lactate in B.subtilis. This Bacillus subtilis (strain 168) protein is L-lactate permease (lutP).